We begin with the raw amino-acid sequence, 611 residues long: UvrABC system protein C (611 aa).

The GIY-YIG domain occupies 14–91 (TSPGCYIHKD…IKENKPKYNI (78 aa)). Positions 196–231 (DQIIEDLRGKMAGAAQTMEFEKAAEYRDLIQSIGTL) constitute a UVR domain.

The protein belongs to the UvrC family. In terms of assembly, interacts with UvrB in an incision complex.

Its subcellular location is the cytoplasm. Its function is as follows. The UvrABC repair system catalyzes the recognition and processing of DNA lesions. UvrC both incises the 5' and 3' sides of the lesion. The N-terminal half is responsible for the 3' incision and the C-terminal half is responsible for the 5' incision. The protein is UvrABC system protein C of Streptococcus gordonii (strain Challis / ATCC 35105 / BCRC 15272 / CH1 / DL1 / V288).